Consider the following 469-residue polypeptide: Uridine kinase-like protein 4 (469 aa).

Positions 46–249 are uridine kinase; it reads QRQPFVIGVA…IVQHICTKLG (204 aa). The segment at 259–469 is uracil phosphoribosyltransferase; the sequence is NLYVIHSTFQ…GDRYFGTDDD (211 aa). Residues lysine 283, arginine 292, and 326–329 each bind GTP; that span reads CKRL. Positions 336 and 361 each coordinate 5-phospho-alpha-D-ribose 1-diphosphate. Position 381 (arginine 381) interacts with GTP. Residues aspartate 387, 392 to 395, and glutamate 458 contribute to the 5-phospho-alpha-D-ribose 1-diphosphate site; that span reads TGNS. Residue 457–459 participates in uracil binding; sequence GEF.

It in the N-terminal section; belongs to the uridine kinase family. The protein in the C-terminal section; belongs to the UPRTase family. Mg(2+) is required as a cofactor.

It catalyses the reaction UMP + diphosphate = 5-phospho-alpha-D-ribose 1-diphosphate + uracil. It carries out the reaction cytidine + ATP = CMP + ADP + H(+). The enzyme catalyses uridine + ATP = UMP + ADP + H(+). Its pathway is pyrimidine metabolism; UMP biosynthesis via salvage pathway; UMP from uracil: step 1/1. It functions in the pathway pyrimidine metabolism; CTP biosynthesis via salvage pathway; CTP from cytidine: step 1/3. The protein operates within pyrimidine metabolism; UMP biosynthesis via salvage pathway; UMP from uridine: step 1/1. Its activity is regulated as follows. Allosterically activated by GTP. In terms of biological role, involved in the pyrimidine salvage pathway. The uracil phosphoribosyltransferase (UPRT) activity, that catalyzes the conversion of uracil and 5-phospho-alpha-D-ribose 1-diphosphate (PRPP) to UMP and diphosphate, is unsure. The sequence is that of Uridine kinase-like protein 4 (UKL4) from Arabidopsis thaliana (Mouse-ear cress).